A 959-amino-acid chain; its full sequence is Protein moonraker (959 aa).

The interval 124-156 (LPHSSHKGMHTKVERKDSKSQDVCHCSHQPSRV) is disordered. The segment covering 134 to 145 (TKVERKDSKSQD) has biased composition (basic and acidic residues). Serine 279 bears the Phosphoserine mark. A compositionally biased stretch (basic and acidic residues) spans 456–470 (EEAPRIEDNGTDFKD). Disordered stretches follow at residues 456–560 (EEAP…ASPK) and 572–610 (RDAA…AESS). Polar residues predominate over residues 515–533 (PNQPYSKSRLQQTTVSSRL). A compositionally biased stretch (pro residues) spans 547–558 (WIPPNPTSPPAS). A coiled-coil region spans residues 582–674 (QEDIHKESQL…TQLADKVEEA (93 aa)). Basic and acidic residues predominate over residues 583-599 (EDIHKESQLRGDAEQEA). Serine 691 carries the post-translational modification Phosphoserine. 2 disordered regions span residues 692 to 721 (SVEA…SDVP) and 848 to 883 (LDES…PLSV). The segment covering 707–717 (AAAAAQPAEQA) has biased composition (low complexity). Over residues 857-874 (GSEKREAPLPLSREDLHQ) the composition is skewed to basic and acidic residues. The interval 877 to 959 (GQTPLSVPPR…FTSEFLEAAA (83 aa)) is necessary and sufficient for CEP20-binding.

In terms of assembly, interacts with CEP63 and WDR62. Forms a complex with OFD1 and CEP20/FOR20. Interacts with PCM1.

The protein localises to the cytoplasm. Its subcellular location is the cytoskeleton. It localises to the microtubule organizing center. It is found in the centrosome. The protein resides in the centriolar satellite. Involved in centriole duplication. Positively regulates CEP63 centrosomal localization. Required for WDR62 centrosomal localization and promotes the centrosomal localization of CDK2. May play a role in cilium assembly. This chain is Protein moonraker (Kiaa0753), found in Mus musculus (Mouse).